The primary structure comprises 382 residues: Sphingoid long-chain base transporter RSB1 (382 aa).

The Extracellular segment spans residues 1–34 (MSNATNNTLGSLLPQLEAAANSNSLYGGMVPNLR). Asn-3 and Asn-6 each carry an N-linked (GlcNAc...) asparagine glycan. The chain crosses the membrane as a helical span at residues 35–55 (FNITMIVIWGILLTIHVVQLL). Over 56–57 (MR) the chain is Cytoplasmic. A helical membrane pass occupies residues 58–78 (QYWFSIAFICTGILEVLGFIG). At 79–90 (RTWSHSNVADMD) the chain is on the extracellular side. The chain crosses the membrane as a helical span at residues 91-111 (AFLLNMICLTIAPVFTMGGIY). At 112 to 135 (YQLAKLIEVYGHRFSLLPSPMAYS) the chain is on the cytoplasmic side. Residues 136-156 (FIFICSDIVSLVVQAVGGGLC) traverse the membrane as a helical segment. Topologically, residues 157–171 (GVAVTDGTSTTTGNH) are extracellular. The helical transmembrane segment at 172-192 (VFIAGLAIQVASMAIFLMLWF) threads the bilayer. Residues 193-241 (HFLFRIYISVRWEHINSRPISLSLLKISQTEVDYLYREKFHFLRLEPKR) lie on the Cytoplasmic side of the membrane. A helical transmembrane segment spans residues 242–262 (WVFHYFNLAMTVAVLTIFTRC). Over 263–281 (CYRLAELVVGWDGYLITHE) the chain is Extracellular. The helical transmembrane segment at 282–302 (WYFIILDALMMAIATVTLTIF) threads the bilayer. Residues 303–382 (HPGFAFKGRS…LFSSKKKAKL (80 aa)) lie on the Cytoplasmic side of the membrane.

It belongs to the lipid-translocating exporter (LTE) (TC 9.A.26.1) family.

It is found in the cell membrane. In terms of biological role, catalyzes the ATP-dependent translocation of sphingoid long-chain bases (LCBs) from the cytoplasmic site toward the extracytoplasmic side of the membrane (flip-flop). Involved in the establishment of the functional lipid asymmetry of the plasma membrane. Regulates intracellular levels of LCBs, sphingolipid precursors that are growth inhibitory at increased levels. This Saccharomyces cerevisiae (strain AWRI1631) (Baker's yeast) protein is Sphingoid long-chain base transporter RSB1 (RSB1).